A 386-amino-acid polypeptide reads, in one-letter code: 3-ketosteroid-9-alpha-monooxygenase, oxygenase component (386 aa).

The 103-residue stretch at 26-128 (WHCLGVAKDY…TDVRSGLLFV (103 aa)) folds into the Rieske domain. The [2Fe-2S] cluster site is built by cysteine 67, histidine 69, cysteine 86, and histidine 89. Residues asparagine 175, histidine 181, histidine 186, and aspartate 304 each contribute to the Fe cation site.

In terms of assembly, homotrimer. The two-component system 3-ketosteroid-9-alpha-monooxygenase is composed of an oxygenase component KshA and a reductase component KshB. It depends on [2Fe-2S] cluster as a cofactor. Requires Fe cation as cofactor.

It catalyses the reaction androsta-1,4-diene-3,17-dione + 2 reduced [2Fe-2S]-[ferredoxin] + O2 + 2 H(+) = 9alpha-hydroxyandrosta-1,4-diene-3,17-dione + 2 oxidized [2Fe-2S]-[ferredoxin] + H2O. It carries out the reaction androst-4-ene-3,17-dione + NADH + O2 + H(+) = 9alpha-hydroxy-androst-4-ene-3,17-dione + NAD(+) + H2O. The enzyme catalyses 3-oxochol-4-en-22-oate + NADH + O2 + H(+) = 9alpha-hydroxy-3-oxochol-4-en-22-oate + NAD(+) + H2O. The catalysed reaction is 3-oxochola-1,4-dien-22-oate + NADH + O2 + H(+) = 9alpha-hydroxy-3-oxochola-1,4-dien-22-oate + NAD(+) + H2O. It catalyses the reaction 3-oxochol-4-en-22-oyl-CoA + NADH + O2 + H(+) = 9alpha-hydroxy-3-oxochol-4-en-22-oyl-CoA + NAD(+) + H2O. It carries out the reaction 3-oxochola-1,4-dien-22-oyl-CoA + NADH + O2 + H(+) = 9alpha-hydroxy-3-oxochola-1,4-dien-22-oyl-CoA + NAD(+) + H2O. It participates in lipid metabolism; steroid biosynthesis. Functionally, involved in the degradation of cholesterol. Catalyzes the introduction of a 9a-hydroxyl moiety into 1,4-androstadiene-3,17-dione (ADD) to yield the 9alpha-hydroxy-1,4-androstadiene-3,17-dione (9OHADD) intermediate which spontaneously form 3-hydroxy-9,10-seconandrost-1,3,5(10)-triene-9,17-dione (HSA) via the meta-cleavage of ring B with concomitant aromatization of ring A. KSH is also able to use 4-androstene-3,17-dione (AD), 3-oxo-23,24-bisnorcholesta-4-en-22-oate (4-BNC), 3-oxo-23,24-bisnorcholesta-1,4-dien-22-oate (1,4-BNC), 3-oxo-23,24-bisnorcholesta-4-en-22-oyl-coenzyme A thioester (4-BNC-CoA) and 3-oxo-23,24-bisnorcholesta-1,4-dien-22-oyl-coenzyme A thioester (1,4-BNC-CoA) as substrates. This Mycobacterium tuberculosis (strain ATCC 25618 / H37Rv) protein is 3-ketosteroid-9-alpha-monooxygenase, oxygenase component (kshA).